The primary structure comprises 939 residues: Valine--tRNA ligase (939 aa).

The short motif at proline 47–histidine 57 is the 'HIGH' region element. The 'KMSKS' region motif lies at lysine 563 to serine 567. Lysine 566 provides a ligand contact to ATP. Residues glutamate 874–leucine 939 are a coiled coil.

It belongs to the class-I aminoacyl-tRNA synthetase family. ValS type 1 subfamily. As to quaternary structure, monomer.

The protein localises to the cytoplasm. It carries out the reaction tRNA(Val) + L-valine + ATP = L-valyl-tRNA(Val) + AMP + diphosphate. Its function is as follows. Catalyzes the attachment of valine to tRNA(Val). As ValRS can inadvertently accommodate and process structurally similar amino acids such as threonine, to avoid such errors, it has a 'posttransfer' editing activity that hydrolyzes mischarged Thr-tRNA(Val) in a tRNA-dependent manner. This Chlamydia trachomatis serovar A (strain ATCC VR-571B / DSM 19440 / HAR-13) protein is Valine--tRNA ligase.